We begin with the raw amino-acid sequence, 73 residues long: uncharacterized protein (73 aa).

The signal sequence occupies residues 1–23 (MLHLIKMVSKIVLLITLVFIVSA).

This is an uncharacterized protein from Acheta domesticus (House cricket).